A 543-amino-acid chain; its full sequence is ADIPOR-like receptor IZH3 (543 aa).

Residues 1–259 (MMDSSSKSLT…NWYGWHNETS (259 aa)) lie on the Lumenal side of the membrane. 4 N-linked (GlcNAc...) asparagine glycosylation sites follow: N45, N123, N153, and N256. Residues 260 to 280 (NIWSHLLGAIYIIYLAIYDFP) traverse the membrane as a helical segment. Topologically, residues 281–295 (QSEVWRNSQVPPQAR) are cytoplasmic. Residues 296–316 (WIVFMFLAAALKCMLSSVFWH) traverse the membrane as a helical segment. Residues 317–330 (TFNGTSFLKLRSKF) are Lumenal-facing. The N-linked (GlcNAc...) asparagine glycan is linked to N319. Residues 331-353 (ACVDYSGITILITASILTTEFVT) traverse the membrane as a helical segment. The Cytoplasmic portion of the chain corresponds to 354–357 (MYSC). The chain crosses the membrane as a helical span at residues 358–378 (YWAMYTYMSISLALGVFGVFM). Topologically, residues 379 to 395 (NWSPRFDRPEARPLRIR) are lumenal. Residues 396 to 416 (FFILLATMGVLSFLHLIFLTD) form a helical membrane-spanning segment. Topologically, residues 417-425 (LHYAATLFS) are cytoplasmic. A helical membrane pass occupies residues 426–446 (PVTYKSVVWYLVGVVFYGSFI). The Lumenal segment spans residues 447-505 (PERFRSDVQVDKTIPTNYELSTDLEIITKQREIHFREVPTAHSKCSSCPSHAKSFKSLW). The chain crosses the membrane as a helical span at residues 506–526 (WVDYFGCSHTFWHFFVVLGVI). Topologically, residues 527–543 (GHYRAILDMFAKRWILS) are cytoplasmic.

It belongs to the ADIPOR family.

Its subcellular location is the endoplasmic reticulum membrane. Functionally, ADIPOR-like receptor involved in zinc metabolism either by altering membrane sterol content or by directly altering cellular zinc levels. The protein is ADIPOR-like receptor IZH3 (IZH3) of Saccharomyces cerevisiae (strain ATCC 204508 / S288c) (Baker's yeast).